A 127-amino-acid polypeptide reads, in one-letter code: Large ribosomal subunit protein bL12 (127 aa).

This sequence belongs to the bacterial ribosomal protein bL12 family. Homodimer. Part of the ribosomal stalk of the 50S ribosomal subunit. Forms a multimeric L10(L12)X complex, where L10 forms an elongated spine to which 2 to 4 L12 dimers bind in a sequential fashion. Binds GTP-bound translation factors.

Forms part of the ribosomal stalk which helps the ribosome interact with GTP-bound translation factors. Is thus essential for accurate translation. This Desulforapulum autotrophicum (strain ATCC 43914 / DSM 3382 / VKM B-1955 / HRM2) (Desulfobacterium autotrophicum) protein is Large ribosomal subunit protein bL12.